Here is a 148-residue protein sequence, read N- to C-terminus: Protein NrdI (148 aa).

Belongs to the NrdI family.

Functionally, probably involved in ribonucleotide reductase function. This Corynebacterium glutamicum (strain R) protein is Protein NrdI.